The sequence spans 853 residues: DNA mismatch repair protein MutS (853 aa).

613-620 is a binding site for ATP; the sequence is GPNMGGKS.

Belongs to the DNA mismatch repair MutS family.

Functionally, this protein is involved in the repair of mismatches in DNA. It is possible that it carries out the mismatch recognition step. This protein has a weak ATPase activity. The polypeptide is DNA mismatch repair protein MutS (Vibrio parahaemolyticus serotype O3:K6 (strain RIMD 2210633)).